The following is a 102-amino-acid chain: Large ribosomal subunit protein uL24 (102 aa).

The protein belongs to the universal ribosomal protein uL24 family. Part of the 50S ribosomal subunit.

Its function is as follows. One of two assembly initiator proteins, it binds directly to the 5'-end of the 23S rRNA, where it nucleates assembly of the 50S subunit. Functionally, one of the proteins that surrounds the polypeptide exit tunnel on the outside of the subunit. This chain is Large ribosomal subunit protein uL24, found in Finegoldia magna (strain ATCC 29328 / DSM 20472 / WAL 2508) (Peptostreptococcus magnus).